Here is a 400-residue protein sequence, read N- to C-terminus: Tryptophan synthase beta chain (400 aa).

K90 carries the N6-(pyridoxal phosphate)lysine modification.

The protein belongs to the TrpB family. As to quaternary structure, tetramer of two alpha and two beta chains. Pyridoxal 5'-phosphate is required as a cofactor.

It carries out the reaction (1S,2R)-1-C-(indol-3-yl)glycerol 3-phosphate + L-serine = D-glyceraldehyde 3-phosphate + L-tryptophan + H2O. The protein operates within amino-acid biosynthesis; L-tryptophan biosynthesis; L-tryptophan from chorismate: step 5/5. Functionally, the beta subunit is responsible for the synthesis of L-tryptophan from indole and L-serine. The chain is Tryptophan synthase beta chain from Bacillus velezensis (strain DSM 23117 / BGSC 10A6 / LMG 26770 / FZB42) (Bacillus amyloliquefaciens subsp. plantarum).